The chain runs to 160 residues: Transcription elongation factor GreB (160 aa).

The protein belongs to the GreA/GreB family. GreB subfamily.

In terms of biological role, necessary for efficient RNA polymerase transcription elongation past template-encoded arresting sites. The arresting sites in DNA have the property of trapping a certain fraction of elongating RNA polymerases that pass through, resulting in locked ternary complexes. Cleavage of the nascent transcript by cleavage factors such as GreA or GreB allows the resumption of elongation from the new 3'terminus. GreB releases sequences of up to 9 nucleotides in length. The chain is Transcription elongation factor GreB from Vibrio vulnificus (strain CMCP6).